The chain runs to 65 residues: Small ribosomal subunit protein bS21 (65 aa).

A disordered region spans residues 45-65; that stretch reads GRLKRSRSKRRAQRANEERNS. Residues 48-57 are compositionally biased toward basic residues; the sequence is KRSRSKRRAQ.

Belongs to the bacterial ribosomal protein bS21 family.

This chain is Small ribosomal subunit protein bS21, found in Chlorobium luteolum (strain DSM 273 / BCRC 81028 / 2530) (Pelodictyon luteolum).